A 124-amino-acid chain; its full sequence is Small ribosomal subunit protein bS6 (124 aa).

Positions 96-124 (ETGPSPMMKEVQREEAKKAAAAQPTEAQA) are disordered. The segment covering 114–124 (AAAAQPTEAQA) has biased composition (low complexity).

The protein belongs to the bacterial ribosomal protein bS6 family.

Binds together with bS18 to 16S ribosomal RNA. This is Small ribosomal subunit protein bS6 from Burkholderia lata (strain ATCC 17760 / DSM 23089 / LMG 22485 / NCIMB 9086 / R18194 / 383).